The sequence spans 717 residues: Cell division cycle protein 27 homolog A (717 aa).

Positions 198–208 (TEHIPGENQQD) are enriched in polar residues. Disordered stretches follow at residues 198–217 (TEHI…QPGD), 282–315 (LSAE…KDSH), and 342–374 (SKEA…SPDR). The segment covering 293–304 (RRSARIAARKKN) has biased composition (basic residues). Over residues 342–356 (SKEATTSGQSVSDIG) the composition is skewed to polar residues. TPR repeat units lie at residues 421–454 (HWVL…YPYA), 489–522 (PESW…NERF), 524–556 (YAHT…DTRH), 557–590 (YNAW…NPRS), 592–624 (VIMC…DAKN), 625–658 (PLPK…APQE), and 659–692 (SSVH…SPSP).

Belongs to the APC3/CDC27 family. As to quaternary structure, the APC/C is composed of at least 10 subunits. Interacts with APC2 and APC10.

It is found in the nucleus. The protein operates within protein modification; protein ubiquitination. Its function is as follows. Component of the anaphase promoting complex/cyclosome (APC/C), a cell cycle-regulated E3 ubiquitin-protein ligase complex that controls progression through mitosis and the G1 phase of the cell cycle. The APC/C complex controls several key steps in the cell cycle by mediating ubiquitination and subsequent degradation of target proteins such as cyclins. The APC/C complex is required for the female gametophyte development and is involved in several aspect of development by controlling cell division and cell elongation. Involved in the control of endoreduplication. Functionally redundant with CDC27B in the control of gametophyte development. This chain is Cell division cycle protein 27 homolog A (CDC27A), found in Arabidopsis thaliana (Mouse-ear cress).